A 214-amino-acid polypeptide reads, in one-letter code: ATP-dependent Clp protease proteolytic subunit (214 aa).

Residue S113 is the Nucleophile of the active site. H138 is a catalytic residue.

Belongs to the peptidase S14 family. As to quaternary structure, fourteen ClpP subunits assemble into 2 heptameric rings which stack back to back to give a disk-like structure with a central cavity, resembling the structure of eukaryotic proteasomes.

The protein localises to the cytoplasm. The catalysed reaction is Hydrolysis of proteins to small peptides in the presence of ATP and magnesium. alpha-casein is the usual test substrate. In the absence of ATP, only oligopeptides shorter than five residues are hydrolyzed (such as succinyl-Leu-Tyr-|-NHMec, and Leu-Tyr-Leu-|-Tyr-Trp, in which cleavage of the -Tyr-|-Leu- and -Tyr-|-Trp bonds also occurs).. Cleaves peptides in various proteins in a process that requires ATP hydrolysis. Has a chymotrypsin-like activity. Plays a major role in the degradation of misfolded proteins. The polypeptide is ATP-dependent Clp protease proteolytic subunit (Alkalilimnicola ehrlichii (strain ATCC BAA-1101 / DSM 17681 / MLHE-1)).